The sequence spans 793 residues: uncharacterized protein (793 aa).

The first 21 residues, 1–21 (MLKKTLLAYTIGFAFSPPANA), serve as a signal peptide directing secretion. The cysteines at positions 769 and 792 are disulfide-linked.

This sequence belongs to the fimbrial export usher family.

Its subcellular location is the cell outer membrane. Involved in the export and assembly of a fimbrial subunit across the outer membrane. This is an uncharacterized protein from Escherichia coli (strain K12).